The following is a 69-amino-acid chain: Omega-oxotoxin-Ol1a (69 aa).

The Oxytoxin-type inhibitor cystine knot (ICK) domain occupies 1-68 (DWECLPLHSS…GKINTCDKYK (68 aa)). Intrachain disulfides connect cysteine 4-cysteine 18, cysteine 11-cysteine 23, cysteine 15-cysteine 64, cysteine 17-cysteine 52, and cysteine 25-cysteine 50. Asparagine 69 is modified (asparagine amide).

The protein belongs to the spiderine family. Spiderine subfamily. Expressed by the venom gland.

Its subcellular location is the secreted. Functionally, weak blocker of vertebrate P/Q-, N- and L-type voltage-gated calcium channels (Cav1 and Cav2). Is both paralytic and lethal when injected into lepidopteran larvae. Is not toxic to mice. In Oxyopes lineatus (Lynx spider), this protein is Omega-oxotoxin-Ol1a.